The following is a 505-amino-acid chain: Deoxyguanosinetriphosphate triphosphohydrolase (505 aa).

The HD domain maps to 66–273 (RLTHSMEVQQ…MEAADDISYC (208 aa)).

It belongs to the dGTPase family. Type 1 subfamily. In terms of assembly, homotetramer. Requires Mg(2+) as cofactor.

It catalyses the reaction dGTP + H2O = 2'-deoxyguanosine + triphosphate + H(+). In terms of biological role, dGTPase preferentially hydrolyzes dGTP over the other canonical NTPs. This is Deoxyguanosinetriphosphate triphosphohydrolase from Salmonella paratyphi A (strain AKU_12601).